Reading from the N-terminus, the 310-residue chain is Protoheme IX farnesyltransferase (310 aa).

Transmembrane regions (helical) follow at residues 30 to 47, 50 to 70, 102 to 122, 126 to 146, 152 to 172, 181 to 201, 228 to 248, 251 to 271, and 286 to 306; these read VTTL…FGAA, GLPL…LVSG, LGHG…YLGL, WLTA…YTPL, ICTT…WTAI, VALF…IAWL, IVIY…LRFA, IYFL…LRMF, and ARQL…VMML.

The protein belongs to the UbiA prenyltransferase family. Protoheme IX farnesyltransferase subfamily.

Its subcellular location is the cell inner membrane. It catalyses the reaction heme b + (2E,6E)-farnesyl diphosphate + H2O = Fe(II)-heme o + diphosphate. Its pathway is porphyrin-containing compound metabolism; heme O biosynthesis; heme O from protoheme: step 1/1. Its function is as follows. Converts heme B (protoheme IX) to heme O by substitution of the vinyl group on carbon 2 of heme B porphyrin ring with a hydroxyethyl farnesyl side group. In Koribacter versatilis (strain Ellin345), this protein is Protoheme IX farnesyltransferase.